The chain runs to 248 residues: uncharacterized protein (248 aa).

A signal peptide spans 1-23; that stretch reads MLKKIVIGVTATAAFGIGAGALA.

The protein resides in the cell outer membrane. This is an uncharacterized protein from Coxiella burnetii (strain RSA 493 / Nine Mile phase I).